The sequence spans 120 residues: Large ribosomal subunit protein uL18 (120 aa).

Belongs to the universal ribosomal protein uL18 family. In terms of assembly, part of the 50S ribosomal subunit; part of the 5S rRNA/L5/L18/L25 subcomplex. Contacts the 5S and 23S rRNAs.

Functionally, this is one of the proteins that bind and probably mediate the attachment of the 5S RNA into the large ribosomal subunit, where it forms part of the central protuberance. This Methylobacterium nodulans (strain LMG 21967 / CNCM I-2342 / ORS 2060) protein is Large ribosomal subunit protein uL18.